A 182-amino-acid polypeptide reads, in one-letter code: Ribulose bisphosphate carboxylase small subunit, chloroplastic 3 (182 aa).

A chloroplast-targeting transit peptide spans 1–41 (MASIMMNKSVVLSKECAKPLASPKVTLNKRGFATTIATKNR).

It belongs to the RuBisCO small chain family. As to quaternary structure, heterohexadecamer of 8 large and 8 small subunits.

The protein localises to the plastid. It localises to the chloroplast. RuBisCO catalyzes two reactions: the carboxylation of D-ribulose 1,5-bisphosphate, the primary event in carbon dioxide fixation, as well as the oxidative fragmentation of the pentose substrate. Both reactions occur simultaneously and in competition at the same active site. Although the small subunit is not catalytic it is essential for maximal activity. In Acetabularia acetabulum (Mermaid's wine glass), this protein is Ribulose bisphosphate carboxylase small subunit, chloroplastic 3.